The sequence spans 473 residues: Siroheme synthase 2 (473 aa).

Positions 1-204 are precorrin-2 dehydrogenase /sirohydrochlorin ferrochelatase; it reads MDYFPIFCQL…NDHVQADQHV (204 aa). NAD(+)-binding positions include 22–23 and 43–44; these read EI and CE. Ser128 bears the Phosphoserine mark. Residues 216–473 are uroporphyrinogen-III C-methyltransferase; it reads GEVVLVGAGP…KVTECVAHVG (258 aa). Residue Pro225 participates in S-adenosyl-L-methionine binding. Asp248 (proton acceptor) is an active-site residue. Lys270 serves as the catalytic Proton donor. Residues 301 to 303, Ile306, 331 to 332, Met382, and Gly411 contribute to the S-adenosyl-L-methionine site; these read GGD and TA.

This sequence in the N-terminal section; belongs to the precorrin-2 dehydrogenase / sirohydrochlorin ferrochelatase family. The protein in the C-terminal section; belongs to the precorrin methyltransferase family.

It catalyses the reaction uroporphyrinogen III + 2 S-adenosyl-L-methionine = precorrin-2 + 2 S-adenosyl-L-homocysteine + H(+). The catalysed reaction is precorrin-2 + NAD(+) = sirohydrochlorin + NADH + 2 H(+). The enzyme catalyses siroheme + 2 H(+) = sirohydrochlorin + Fe(2+). It functions in the pathway cofactor biosynthesis; adenosylcobalamin biosynthesis; precorrin-2 from uroporphyrinogen III: step 1/1. The protein operates within cofactor biosynthesis; adenosylcobalamin biosynthesis; sirohydrochlorin from precorrin-2: step 1/1. Its pathway is porphyrin-containing compound metabolism; siroheme biosynthesis; precorrin-2 from uroporphyrinogen III: step 1/1. It participates in porphyrin-containing compound metabolism; siroheme biosynthesis; siroheme from sirohydrochlorin: step 1/1. It functions in the pathway porphyrin-containing compound metabolism; siroheme biosynthesis; sirohydrochlorin from precorrin-2: step 1/1. Multifunctional enzyme that catalyzes the SAM-dependent methylations of uroporphyrinogen III at position C-2 and C-7 to form precorrin-2 via precorrin-1. Then it catalyzes the NAD-dependent ring dehydrogenation of precorrin-2 to yield sirohydrochlorin. Finally, it catalyzes the ferrochelation of sirohydrochlorin to yield siroheme. The sequence is that of Siroheme synthase 2 from Yersinia pseudotuberculosis serotype O:1b (strain IP 31758).